A 107-amino-acid polypeptide reads, in one-letter code: Large ribosomal subunit protein uL24 (107 aa).

It belongs to the universal ribosomal protein uL24 family. As to quaternary structure, part of the 50S ribosomal subunit.

Functionally, one of two assembly initiator proteins, it binds directly to the 5'-end of the 23S rRNA, where it nucleates assembly of the 50S subunit. Its function is as follows. One of the proteins that surrounds the polypeptide exit tunnel on the outside of the subunit. This chain is Large ribosomal subunit protein uL24, found in Streptomyces coelicolor (strain ATCC BAA-471 / A3(2) / M145).